The chain runs to 546 residues: E3 ubiquitin-protein ligase NEURL1B (546 aa).

Residues 38–194 (APRFHAQAKG…ITDEVQLLES (157 aa)) form the NHR 1 domain. Threonine 199 is modified (phosphothreonine). Residues 270–424 (ELRFHATRGP…GVAGQLRLLG (155 aa)) enclose the NHR 2 domain. The tract at residues 429–490 (SSETMTPSGS…FSAPEPTGSR (62 aa)) is disordered. A compositionally biased stretch (low complexity) spans 457 to 471 (SSSASESSLVTAPSS). The RING-type zinc-finger motif lies at 494 to 534 (CTVCFDSEVDTVIYTCGHMCLCHGCGLRLRRQARACCPICR).

As to quaternary structure, interacts with DLL1 and DLL4. In terms of tissue distribution, expressed in the limb buds and dorsal root ganglia. Expressed in brain and kidney and at low levels in the heart.

Its subcellular location is the cytoplasm. The catalysed reaction is S-ubiquitinyl-[E2 ubiquitin-conjugating enzyme]-L-cysteine + [acceptor protein]-L-lysine = [E2 ubiquitin-conjugating enzyme]-L-cysteine + N(6)-ubiquitinyl-[acceptor protein]-L-lysine.. It participates in protein modification; protein ubiquitination. Its function is as follows. E3 ubiquitin-protein ligase involved in regulation of the Notch pathway through influencing the stability and activity of several Notch ligands. This chain is E3 ubiquitin-protein ligase NEURL1B (Neurl1b), found in Mus musculus (Mouse).